Consider the following 454-residue polypeptide: UPF0210 protein BAD_1323 (454 aa).

It belongs to the UPF0210 family. Homodimer.

The protein is UPF0210 protein BAD_1323 of Bifidobacterium adolescentis (strain ATCC 15703 / DSM 20083 / NCTC 11814 / E194a).